Here is a 325-residue protein sequence, read N- to C-terminus: tRNA(Ile)-lysidine synthase (325 aa).

Residue 34–39 (SGGQDS) participates in ATP binding.

It belongs to the tRNA(Ile)-lysidine synthase family.

It localises to the cytoplasm. The enzyme catalyses cytidine(34) in tRNA(Ile2) + L-lysine + ATP = lysidine(34) in tRNA(Ile2) + AMP + diphosphate + H(+). Functionally, ligates lysine onto the cytidine present at position 34 of the AUA codon-specific tRNA(Ile) that contains the anticodon CAU, in an ATP-dependent manner. Cytidine is converted to lysidine, thus changing the amino acid specificity of the tRNA from methionine to isoleucine. This Synechococcus sp. (strain ATCC 27144 / PCC 6301 / SAUG 1402/1) (Anacystis nidulans) protein is tRNA(Ile)-lysidine synthase.